Reading from the N-terminus, the 327-residue chain is MGNADLRQLAAIEETPFADLEGSVVAVDAHNWLYKYLTTTVQWTGADVYTTSDGTEVANLVGAVQGLPKFFEHGLTPVFVWDGGVTELKDDEIADRREQRERYEEQLDDAREAGDAAEAARLDARTQRLTPTIHETTRELFDLLDIPQVEAPAEGEAQAAYMTRTDDAVDYAGSDDYDCLLLGSPVTLRQLTSSGHPELMDFDATLAEHDLTWEQLVDVGILCGTDFNPGIDGFGPTTALDAIGEHGDLWDVLAAEGEHVAHGDRIRELFLNPDVTDDYVIDPDVSPAIDAARAFVTDEWEVDADAVARGFERIDAAAAQTGLDRWT.

The segment at 1–100 is N-domain; that stretch reads MGNADLRQLA…DEIADRREQR (100 aa). Mg(2+)-binding residues include aspartate 28, aspartate 82, glutamate 154, glutamate 156, aspartate 176, aspartate 178, and aspartate 226. Positions 118-247 are I-domain; the sequence is EAARLDARTQ…TALDAIGEHG (130 aa). Positions 319-327 are interaction with PCNA; it reads AQTGLDRWT.

Belongs to the XPG/RAD2 endonuclease family. FEN1 subfamily. Interacts with PCNA. PCNA stimulates the nuclease activity without altering cleavage specificity. It depends on Mg(2+) as a cofactor.

In terms of biological role, structure-specific nuclease with 5'-flap endonuclease and 5'-3' exonuclease activities involved in DNA replication and repair. During DNA replication, cleaves the 5'-overhanging flap structure that is generated by displacement synthesis when DNA polymerase encounters the 5'-end of a downstream Okazaki fragment. Binds the unpaired 3'-DNA end and kinks the DNA to facilitate 5' cleavage specificity. Cleaves one nucleotide into the double-stranded DNA from the junction in flap DNA, leaving a nick for ligation. Also involved in the base excision repair (BER) pathway. Acts as a genome stabilization factor that prevents flaps from equilibrating into structures that lead to duplications and deletions. Also possesses 5'-3' exonuclease activity on nicked or gapped double-stranded DNA. This is Flap endonuclease 1 from Halobacterium salinarum (strain ATCC 29341 / DSM 671 / R1).